Reading from the N-terminus, the 272-residue chain is HMP-PP phosphatase (272 aa).

Aspartate 8 functions as the Nucleophile in the catalytic mechanism. Mg(2+) contacts are provided by aspartate 8, aspartate 10, and aspartate 212.

It belongs to the HAD-like hydrolase superfamily. Cof family. It depends on Mg(2+) as a cofactor.

The enzyme catalyses 4-amino-2-methyl-5-(diphosphooxymethyl)pyrimidine + H2O = 4-amino-2-methyl-5-(phosphooxymethyl)pyrimidine + phosphate + H(+). In terms of biological role, catalyzes the hydrolysis of 4-amino-2-methyl-5-hydroxymethylpyrimidine pyrophosphate (HMP-PP) to 4-amino-2-methyl-5-hydroxymethylpyrimidine phosphate (HMP-P). The chain is HMP-PP phosphatase from Enterobacter sp. (strain 638).